The chain runs to 341 residues: Adhesion protein Bd37 (341 aa).

The first 21 residues, 1–21 (MKTSKILNTAAICLLAMGFNG), serve as a signal peptide directing secretion. N-linked (GlcNAc...) asparagine glycans are attached at residues N23 and N30. A disulfide bond links C26 and C307. The interval 36–75 (AAANPVVSTPGNDAQQAGTQQGGANSKSVPEQQPQQAAGE) is disordered. Positions 49–59 (AQQAGTQQGGA) are enriched in low complexity. Over residues 60–75 (NSKSVPEQQPQQAAGE) the composition is skewed to polar residues. A lipid anchor (GPI-anchor amidated serine) is attached at S311. Positions 312–341 (GQGSSPKKPSFAAVPSSLSAIVFGIIVSMF) are cleaved as a propeptide — removed in mature form.

In terms of processing, the signal sequence is cleaved. Glycosylated. Post-translationally, palmitoylated. In terms of processing, not myristoylated.

It is found in the cell membrane. It localises to the secreted. Its subcellular location is the vesicle. Binds to host erythrocytes. This is Adhesion protein Bd37 from Babesia divergens.